An 870-amino-acid chain; its full sequence is A-kinase anchor protein 2 (870 aa).

Disordered stretches follow at residues 14–43 (PGITSTPHSKDHSSPFYSPSHNGLLTDHHE) and 103–165 (IEKA…SSRD). Ser-122 bears the Phosphoserine mark. A compositionally biased stretch (polar residues) spans 133 to 151 (GHSTDQPQDMLGNSLQAPA). Ser-152 bears the Phosphoserine mark. A compositionally biased stretch (low complexity) spans 152–161 (SPSSSTSSHC). Lys-174 is covalently cross-linked (Glycyl lysine isopeptide (Lys-Gly) (interchain with G-Cter in SUMO1); alternate). A Glycyl lysine isopeptide (Lys-Gly) (interchain with G-Cter in SUMO2); alternate cross-link involves residue Lys-174. Residues 213-307 (EEMIELEKER…QQQQLSTSQL (95 aa)) adopt a coiled-coil conformation. Residues 233-324 (KNPGIAAKWW…EHLDSIEHTK (92 aa)) are disordered. Residues 259–274 (LESHRKYKERKEKRAQ) are compositionally biased toward basic and acidic residues. Positions 275–302 (QEQLQLQQQQQQQLQQLQQLQQQQQQQL) are enriched in low complexity. Residues 313 to 324 (AHEHLDSIEHTK) show a composition bias toward basic and acidic residues. Ser-347 carries the post-translational modification Phosphoserine. Residues 409-436 (ESQSAGAGTGNAATQGKEGPYSEPSKRG) are disordered. The segment covering 410–424 (SQSAGAGTGNAATQG) has biased composition (low complexity). Phosphoserine occurs at positions 472, 476, and 528. A compositionally biased stretch (polar residues) spans 506-543 (FSMDNISDSGASNETPNALQENSLADFSLPQTPQTDNP). Disordered regions lie at residues 506–577 (FSMD…DPLE) and 595–688 (QVDK…RPEG). Phosphothreonine is present on Thr-537. Residues 576 to 589 (LEYQAGLLVQNAIQ) are PKA-RII subunit binding domain. The span at 595–608 (QVDKAEVHTSKEGS) shows a compositional bias: basic and acidic residues. Residue Ser-641 is modified to Phosphoserine. Positions 644–665 (QEKRDVLPKILPGEDKTLREKG) are enriched in basic and acidic residues. A coiled-coil region spans residues 720–755 (KLRSRKQRTLSMIEEEIRAAQEREEELKRQRQVRQS). Phosphoserine is present on residues Ser-730, Ser-758, Ser-789, and Ser-796. The disordered stretch occupies residues 740–814 (QEREEELKRQ…EAAGAQRPKN (75 aa)). The segment covering 755 to 774 (STPSPRAQNAPSLPSRTTCY) has biased composition (polar residues).

The protein localises to the apical cell membrane. In terms of biological role, binds to regulatory subunit (RII) of protein kinase A. May be involved in establishing polarity in signaling systems or in integrating PKA-RII isoforms with downstream effectors to capture, amplify and focus diffuse, trans-cellular signals carried by cAMP. Binds to and modulates the structure of the actin cytoskeleton. In Rattus norvegicus (Rat), this protein is A-kinase anchor protein 2.